A 346-amino-acid chain; its full sequence is 4-hydroxy-2-oxovalerate aldolase (346 aa).

The Pyruvate carboxyltransferase domain maps to 8 to 260; the sequence is VILHDMSLRD…ETGIDLYKIM (253 aa). Residue 16 to 17 participates in substrate binding; the sequence is RD. Residue Asp-17 participates in Mn(2+) binding. The Proton acceptor role is filled by His-20. Substrate contacts are provided by Ser-170 and His-199. Mn(2+)-binding residues include His-199 and His-201. Tyr-290 contributes to the substrate binding site.

The protein belongs to the 4-hydroxy-2-oxovalerate aldolase family.

The enzyme catalyses (S)-4-hydroxy-2-oxopentanoate = acetaldehyde + pyruvate. It participates in aromatic compound metabolism; naphthalene degradation. The sequence is that of 4-hydroxy-2-oxovalerate aldolase (nahM) from Pseudomonas putida (Arthrobacter siderocapsulatus).